A 328-amino-acid polypeptide reads, in one-letter code: Putative HTH-type transcriptional regulatory protein MA_3524 (328 aa).

One can recognise an HTH cro/C1-type domain in the interval 132 to 190 (LKKARTDQSMSLGTLASMVGVSRRTISKYEEEGMDASIDVVLQLEDIFGVELARPIDIL). The segment at residues 143–162 (LGTLASMVGVSRRTISKYEE) is a DNA-binding region (H-T-H motif).

This Methanosarcina acetivorans (strain ATCC 35395 / DSM 2834 / JCM 12185 / C2A) protein is Putative HTH-type transcriptional regulatory protein MA_3524.